We begin with the raw amino-acid sequence, 62 residues long: MRCLPVFVILLLLIASTPSVDALQKTKDDMPLASFHDNVKRILQTLSNKRSCCPTILSCCFV.

Positions 1–22 (MRCLPVFVILLLLIASTPSVDA) are cleaved as a signal peptide. Residues 23–48 (LQKTKDDMPLASFHDNVKRILQTLSN) constitute a propeptide that is removed on maturation.

It belongs to the conotoxin T superfamily. Post-translationally, contains 2 disulfide bonds that can be either 'C1-C3, C2-C4' or 'C1-C4, C2-C3', since these disulfide connectivities have been observed for conotoxins with cysteine framework V (for examples, see AC P0DQQ7 and AC P81755). Expressed by the venom duct.

The protein resides in the secreted. This Conus pennaceus (Feathered cone) protein is Conotoxin Pn-B0151.